Reading from the N-terminus, the 184-residue chain is Holliday junction branch migration complex subunit RuvA (184 aa).

The interval 1–64 (MIVAVEGIIT…EDADLLYGFL (64 aa)) is domain I. The interval 65-145 (DEKEKRMFEM…ANDGEQYKIE (81 aa)) is domain II. Residue Glu-145 is a region of interest, flexible linker. A domain III region spans residues 145 to 184 (ETISALENLGFKRDKINKILLNCKSTNTADLIKEALKKLA).

Belongs to the RuvA family. Homotetramer. Forms an RuvA(8)-RuvB(12)-Holliday junction (HJ) complex. HJ DNA is sandwiched between 2 RuvA tetramers; dsDNA enters through RuvA and exits via RuvB. An RuvB hexamer assembles on each DNA strand where it exits the tetramer. Each RuvB hexamer is contacted by two RuvA subunits (via domain III) on 2 adjacent RuvB subunits; this complex drives branch migration. In the full resolvosome a probable DNA-RuvA(4)-RuvB(12)-RuvC(2) complex forms which resolves the HJ.

It is found in the cytoplasm. Its function is as follows. The RuvA-RuvB-RuvC complex processes Holliday junction (HJ) DNA during genetic recombination and DNA repair, while the RuvA-RuvB complex plays an important role in the rescue of blocked DNA replication forks via replication fork reversal (RFR). RuvA specifically binds to HJ cruciform DNA, conferring on it an open structure. The RuvB hexamer acts as an ATP-dependent pump, pulling dsDNA into and through the RuvAB complex. HJ branch migration allows RuvC to scan DNA until it finds its consensus sequence, where it cleaves and resolves the cruciform DNA. The sequence is that of Holliday junction branch migration complex subunit RuvA from Campylobacter hominis (strain ATCC BAA-381 / DSM 21671 / CCUG 45161 / LMG 19568 / NCTC 13146 / CH001A).